The chain runs to 123 residues: Putative iron-sulfur cluster insertion protein ErpA (123 aa).

Residues Cys51, Cys115, and Cys117 each coordinate iron-sulfur cluster.

The protein belongs to the HesB/IscA family. Homodimer. Requires iron-sulfur cluster as cofactor.

Its function is as follows. Required for insertion of 4Fe-4S clusters. This chain is Putative iron-sulfur cluster insertion protein ErpA, found in Burkholderia ambifaria (strain ATCC BAA-244 / DSM 16087 / CCUG 44356 / LMG 19182 / AMMD) (Burkholderia cepacia (strain AMMD)).